Consider the following 419-residue polypeptide: UDP-N-acetylglucosamine 1-carboxyvinyltransferase (419 aa).

22-23 is a phosphoenolpyruvate binding site; the sequence is KN. Arg-93 contributes to the UDP-N-acetyl-alpha-D-glucosamine binding site. Cys-117 functions as the Proton donor in the catalytic mechanism. Cys-117 is modified (2-(S-cysteinyl)pyruvic acid O-phosphothioketal). Residues 122 to 126, Asp-305, and Ile-327 contribute to the UDP-N-acetyl-alpha-D-glucosamine site; that span reads RPVDQ.

It belongs to the EPSP synthase family. MurA subfamily.

The protein localises to the cytoplasm. The enzyme catalyses phosphoenolpyruvate + UDP-N-acetyl-alpha-D-glucosamine = UDP-N-acetyl-3-O-(1-carboxyvinyl)-alpha-D-glucosamine + phosphate. Its pathway is cell wall biogenesis; peptidoglycan biosynthesis. Functionally, cell wall formation. Adds enolpyruvyl to UDP-N-acetylglucosamine. The chain is UDP-N-acetylglucosamine 1-carboxyvinyltransferase from Dichelobacter nodosus (strain VCS1703A).